A 529-amino-acid chain; its full sequence is uncharacterized protein (529 aa).

ATP is bound by residues 178 to 186 (TSGTTGQPK), D401, R416, and K510.

Belongs to the ATP-dependent AMP-binding enzyme family.

This is an uncharacterized protein from Bacillus subtilis (strain 168).